Here is a 138-residue protein sequence, read N- to C-terminus: MSEKIQVLGSRKGLTPALQHYSVVNVADNSGGKEAMIIGVYGYRGVLRRVPFANIADMVMVSIKKGTPEVRKQKFRAVIVRQRMPYRRPDGTWISFEDNAVVIINPDGTPKGTEVRGPIAREAAERWPKIASLATLVV.

Belongs to the universal ribosomal protein uL14 family. Part of the 50S ribosomal subunit. Forms a cluster with proteins L3 and L24e, part of which may contact the 16S rRNA in 2 intersubunit bridges. Contacts initiation factor aIF-6.

The protein localises to the cytoplasm. Its function is as follows. Binds to 23S rRNA. Forms part of two intersubunit bridges in the 70S ribosome. In Saccharolobus solfataricus (strain ATCC 35092 / DSM 1617 / JCM 11322 / P2) (Sulfolobus solfataricus), this protein is Large ribosomal subunit protein uL14.